A 412-amino-acid chain; its full sequence is Putative gustatory receptor 58c (412 aa).

2 consecutive transmembrane segments (helical) span residues 39-59 and 72-92; these read VVYCVILNVVYLLVLPFALFV and MFGVVYNVVALTKLLTMLFLM. Residue Asn158 is glycosylated (N-linked (GlcNAc...) asparagine). The chain crosses the membrane as a helical span at residues 173 to 193; the sequence is IVYALIMILLMSYVDMTVYMV. Asn203 carries N-linked (GlcNAc...) asparagine glycosylation. Helical transmembrane passes span 224 to 241, 262 to 282, and 296 to 316; these read IPREMGLMQILAAWRKLW, VLFNLLTTYIFSIAVLFRLWI, and ILYAIIFLTHHVEIVMQFSIF. N-linked (GlcNAc...) asparagine glycans are attached at residues Asn337, Asn386, and Asn391.

This sequence belongs to the insect chemoreceptor superfamily. Gustatory receptor (GR) family. Gr10a subfamily.

It localises to the cell membrane. Probable gustatory receptor which mediates acceptance or avoidance behavior, depending on its substrates. In Drosophila melanogaster (Fruit fly), this protein is Putative gustatory receptor 58c (Gr58c).